The primary structure comprises 234 residues: Synaptogyrin-1 (234 aa).

An N-acetylmethionine modification is found at methionine 1. Over 1-23 the chain is Cytoplasmic; it reads MEGGAYGAGKAGGAFDPYALVRQ. The MARVEL domain maps to 20-173; the sequence is LVRQPHTILR…QAVLAFQRYQ (154 aa). Residues 24–44 form a helical membrane-spanning segment; the sequence is PHTILRVVSWLFSIVVFGSIV. At 45 to 71 the chain is on the lumenal side; sequence NEGYLNSASEGEEFCIYNRNPNACSYG. A helical membrane pass occupies residues 72–92; that stretch reads VAVGVLAFLTCLLYLALDVYF. At 93 to 103 the chain is on the cytoplasmic side; sequence PQISSVKDRKK. A helical membrane pass occupies residues 104-124; it reads AVLSDIGVSAFWAFLWFVGFC. The Lumenal segment spans residues 125–148; the sequence is YLANQWQVSKPKDNPLNEGTDAAR. The helical transmembrane segment at 149–169 threads the bilayer; the sequence is AAIAFSFFSIFTWAGQAVLAF. Residues 170–234 lie on the Cytoplasmic side of the membrane; the sequence is QRYQIGADSA…EPQGYQSQGY (65 aa). Residues 192-234 form a disordered region; that stretch reads SSMPYAPYVEPSTGPDPAGMGGTYQQPANTFDTEPQGYQSQGY. The segment covering 214 to 234 has biased composition (polar residues); sequence TYQQPANTFDTEPQGYQSQGY.

The protein belongs to the synaptogyrin family.

It is found in the cytoplasmic vesicle. The protein resides in the secretory vesicle. Its subcellular location is the synaptic vesicle membrane. The protein localises to the melanosome. May play a role in regulated exocytosis. Modulates the localization of synaptophysin/SYP into synaptic-like microvesicles and may therefore play a role in synaptic-like microvesicle formation and/or maturation. Involved in the regulation of short-term and long-term synaptic plasticity. This Pongo abelii (Sumatran orangutan) protein is Synaptogyrin-1.